The primary structure comprises 157 residues: SsrA-binding protein (157 aa).

Residues 133–157 form a disordered region; sequence HDKRNSIKEREGKREVERALKSRSR.

The protein belongs to the SmpB family.

The protein localises to the cytoplasm. Its function is as follows. Required for rescue of stalled ribosomes mediated by trans-translation. Binds to transfer-messenger RNA (tmRNA), required for stable association of tmRNA with ribosomes. tmRNA and SmpB together mimic tRNA shape, replacing the anticodon stem-loop with SmpB. tmRNA is encoded by the ssrA gene; the 2 termini fold to resemble tRNA(Ala) and it encodes a 'tag peptide', a short internal open reading frame. During trans-translation Ala-aminoacylated tmRNA acts like a tRNA, entering the A-site of stalled ribosomes, displacing the stalled mRNA. The ribosome then switches to translate the ORF on the tmRNA; the nascent peptide is terminated with the 'tag peptide' encoded by the tmRNA and targeted for degradation. The ribosome is freed to recommence translation, which seems to be the essential function of trans-translation. This chain is SsrA-binding protein, found in Verminephrobacter eiseniae (strain EF01-2).